A 1002-amino-acid chain; its full sequence is UPF0182 protein alr1037 (1002 aa).

The next 9 membrane-spanning stretches (helical) occupy residues 7–29 (FRLS…LGAE), 49–71 (RGVL…LALA), 123–145 (LRWL…VHYG), 178–200 (QVFS…LIYS), 202–224 (FFLR…YNWA), 258–280 (LLEL…TYLL), 300–319 (HLYG…YWLS), 339–361 (VVVQ…FYLL), and 382–404 (GAYL…YLIV).

Belongs to the UPF0182 family.

Its subcellular location is the cell membrane. This is UPF0182 protein alr1037 from Nostoc sp. (strain PCC 7120 / SAG 25.82 / UTEX 2576).